The primary structure comprises 192 residues: dTTP/UTP pyrophosphatase (192 aa).

The active-site Proton acceptor is Asp65.

Belongs to the Maf family. YhdE subfamily. A divalent metal cation is required as a cofactor.

The protein localises to the cytoplasm. The enzyme catalyses dTTP + H2O = dTMP + diphosphate + H(+). It catalyses the reaction UTP + H2O = UMP + diphosphate + H(+). Its function is as follows. Nucleoside triphosphate pyrophosphatase that hydrolyzes dTTP and UTP. May have a dual role in cell division arrest and in preventing the incorporation of modified nucleotides into cellular nucleic acids. The protein is dTTP/UTP pyrophosphatase of Fusobacterium nucleatum subsp. nucleatum (strain ATCC 25586 / DSM 15643 / BCRC 10681 / CIP 101130 / JCM 8532 / KCTC 2640 / LMG 13131 / VPI 4355).